The sequence spans 777 residues: CRISPR system single-strand-specific deoxyribonuclease Cas10/Csm1 (subtype III-A) (777 aa).

Residues 1 to 106 enclose the HD domain; it reads MEIDELTALG…VYEADNLASG (106 aa). The region spanning 513–660 is the GGDEF domain; that stretch reads RRLGVMKGDV…GRNRVFVVGR (148 aa).

Belongs to the CRISPR-associated Cas10/Csm1 family. In terms of assembly, probably part of the Csm effector complex, that includes Cas10, Csm2, Csm3, Csm4, Csm5 and mature crRNA. Will form a homodimer in solution, interacts with Csm4, which is a tighter, better association than the homodimeric Cas10 and uses the same interface for interaction. It depends on a divalent metal cation as a cofactor.

Its activity is regulated as follows. ssDNase activity is inhibited by EDTA. CRISPR (clustered regularly interspaced short palindromic repeat) is an adaptive immune system that provides protection against mobile genetic elements (viruses, transposable elements and conjugative plasmids). CRISPR clusters contain spacers, sequences complementary to antecedent mobile elements, and target invading nucleic acids. CRISPR clusters are transcribed and processed into CRISPR RNA (crRNA). The type III-A Csm effector complex binds crRNA and acts as a crRNA-guided RNase, DNase and cyclic oligoadenylate synthase; binding of target RNA cognate to the crRNA is required for all activities. In terms of biological role, a single-strand deoxyribonuclease (ssDNase) which digests linear and circular ssDNA; has 5'-3' and 3'-5' exonuclease activity as well as a less efficient endonuclease activity. Has a minimal size requirement; 100 nucleotide ssDNA (nt) is more efficiently digested than 50 or 25 nt ssDNA, while 14 nt ssDNA is not cleaved at all. It has no activity on dsDNA or ssRNA. Its function is as follows. ssDNase activity is stimulated in the ternary Csm effector complex; binding of cognate target RNA activates the ssDNase, as the target RNA is degraded ssDNA activity decreases. Functionally, when associated with the ternary Csm effector complex (the crRNA, Cas proteins and a cognate target ssRNA) synthesizes cyclic oligoadenylates (cOA) from ATP. cOAs are second messengers that stimulate the ssRNase activity of Csm6, inducing an antiviral state important for defense against invading nucleic acids. The sequence is that of CRISPR system single-strand-specific deoxyribonuclease Cas10/Csm1 (subtype III-A) from Thermococcus onnurineus (strain NA1).